We begin with the raw amino-acid sequence, 262 residues long: Cutinase 2 (262 aa).

Residue Tyr61 coordinates poly(ethylene terephthalate). Residue Ser131 is the Nucleophile of the active site. Met132 and Trp156 together coordinate poly(ethylene terephthalate). Catalysis depends on charge relay system residues Asp177 and His209. An intrachain disulfide couples Cys242 to Cys260.

Belongs to the AB hydrolase superfamily.

Its subcellular location is the secreted. The protein localises to the periplasm. It carries out the reaction a butanoate ester + H2O = an aliphatic alcohol + butanoate + H(+). It catalyses the reaction an acetyl ester + H2O = an aliphatic alcohol + acetate + H(+). The enzyme catalyses (ethylene terephthalate)(n) + H2O = (ethylene terephthalate)(n-1) + 4-[(2-hydroxyethoxy)carbonyl]benzoate + H(+). The catalysed reaction is cutin + H2O = cutin monomers.. In terms of biological role, catalyzes the hydrolysis of cutin, a polyester that forms the structure of plant cuticle. Shows esterase activity towards p-nitrophenol-linked aliphatic esters (pNP-aliphatic esters). Capable of degrading the plastic poly(ethylene terephthalate) (PET), the most abundant polyester plastic in the world. Capable of degrading the bioplastic poly(lactic acid) (PLLA). The sequence is that of Cutinase 2 from Thermobifida cellulosilytica.